Consider the following 157-residue polypeptide: Endoribonuclease YbeY (157 aa).

Zn(2+) is bound by residues H114, H118, and H124.

This sequence belongs to the endoribonuclease YbeY family. It depends on Zn(2+) as a cofactor.

It localises to the cytoplasm. Its function is as follows. Single strand-specific metallo-endoribonuclease involved in late-stage 70S ribosome quality control and in maturation of the 3' terminus of the 16S rRNA. The chain is Endoribonuclease YbeY from Yersinia pseudotuberculosis serotype O:3 (strain YPIII).